The primary structure comprises 1489 residues: Chromatin-remodeling ATPase INO80 (1489 aa).

S65, S115, and S133 each carry phosphoserine. Disordered regions lie at residues 137 to 311 (NEKD…KLSM) and 393 to 452 (KRER…GLPT). Acidic residues-rich tracts occupy residues 140-164 (DADE…EDEA) and 214-291 (DENE…DFNP). A compositionally biased stretch (low complexity) spans 301–311 (SSSSSSTKLSM). Over residues 393–402 (KREREREEAL) the composition is skewed to basic and acidic residues. The region spanning 476–601 (IWKDMARKDS…SHFIGRKIKT (126 aa)) is the DBINO domain. S610 carries the post-translational modification Phosphoserine. The Helicase ATP-binding domain maps to 718 to 890 (ANLYDQGING…WALLHFIMPS (173 aa)). 731–738 (DEMGLGKT) is an ATP binding site. The DEAQ box signature appears at 841-844 (DEAQ). The 165-residue stretch at 1303–1467 (KLDELLVKLK…TIEVGENDSE (165 aa)) folds into the Helicase C-terminal domain. A disordered region spans residues 1456-1489 (IKTIEVGENDSEVTREGSKSISQDGIKEAASALA).

The protein belongs to the SNF2/RAD54 helicase family. In terms of assembly, component of the chromatin-remodeling INO80 complex, at least composed of ARP4, ARP5, ARP8, RVB1, RVB2, TAF14, NHP10, IES1, IES3, IES4, IES6, ACT1, IES2, IES5 and INO80.

Its subcellular location is the nucleus. The catalysed reaction is ATP + H2O = ADP + phosphate + H(+). Functionally, ATPase component of the INO80 complex which remodels chromatin by shifting nucleosomes and is involved in DNA repair. Its ability to induce transcription of some phosphate-responsive genes is modulated by inositol polyphosphates. The INO80 complex is involved in DNA repair by associating with 'Ser-129' phosphorylated H2A histones as a response to DNA damage. The polypeptide is Chromatin-remodeling ATPase INO80 (INO80) (Saccharomyces cerevisiae (strain ATCC 204508 / S288c) (Baker's yeast)).